We begin with the raw amino-acid sequence, 374 residues long: Heme A synthase (374 aa).

Helical transmembrane passes span 22–42 (VAVW…IGAI), 107–127 (LWGR…WVRG), 135–155 (PTLA…WFMV), 172–192 (LHLG…LGLL), 209–229 (AWAA…VAGI), 265–285 (AAVQ…VLSL), 306–326 (AAAT…VVWI), and 327–347 (PLAT…VWTL). Histidine 271 provides a ligand contact to heme. Histidine 332 is a heme binding site.

This sequence belongs to the COX15/CtaA family. Type 2 subfamily. As to quaternary structure, interacts with CtaB. The cofactor is heme b.

It localises to the cell membrane. The enzyme catalyses Fe(II)-heme o + 2 A + H2O = Fe(II)-heme a + 2 AH2. It functions in the pathway porphyrin-containing compound metabolism; heme A biosynthesis; heme A from heme O: step 1/1. Its function is as follows. Catalyzes the conversion of heme O to heme A by two successive hydroxylations of the methyl group at C8. The first hydroxylation forms heme I, the second hydroxylation results in an unstable dihydroxymethyl group, which spontaneously dehydrates, resulting in the formyl group of heme A. This Rhodospirillum centenum (strain ATCC 51521 / SW) protein is Heme A synthase.